A 104-amino-acid chain; its full sequence is Nucleoid-associated protein EF_2780 (104 aa).

It belongs to the YbaB/EbfC family. Homodimer.

The protein resides in the cytoplasm. Its subcellular location is the nucleoid. Binds to DNA and alters its conformation. May be involved in regulation of gene expression, nucleoid organization and DNA protection. This Enterococcus faecalis (strain ATCC 700802 / V583) protein is Nucleoid-associated protein EF_2780.